We begin with the raw amino-acid sequence, 97 residues long: YcgL domain-containing protein PA1295 (97 aa).

A YcgL domain is found at 3 to 87; it reads RICSVYKSPR…GEEEYIEHLP (85 aa).

The sequence is that of YcgL domain-containing protein PA1295 from Pseudomonas aeruginosa (strain ATCC 15692 / DSM 22644 / CIP 104116 / JCM 14847 / LMG 12228 / 1C / PRS 101 / PAO1).